Consider the following 211-residue polypeptide: Protein CHLORORESPIRATORY REDUCTION 41, chloroplastic (211 aa).

Residues 1–38 constitute a chloroplast transit peptide; that stretch reads MASTSTLLLPSLSSKNLHIAVPIRTNSFVRRTTKFSTK. Positions 136–163 form a coiled coil; sequence AKAGEIVAERAREEAEVLRDEGKVEERM.

Biogenesis factor component of the plastidial NDH subcomplex A.

The protein localises to the plastid. Its subcellular location is the chloroplast. It localises to the chloroplast stroma. Required for both formation and activity of the chloroplast NAD(P)H dehydrogenase (NDH) complex of the photosynthetic electron transport chain. Functions in assembly or stabilization of the NDH complex; probably involved, together with NdhO and NdhH, in the formation of an NDH subcomplex A assembly intermediate (NAI500). The polypeptide is Protein CHLORORESPIRATORY REDUCTION 41, chloroplastic (Arabidopsis thaliana (Mouse-ear cress)).